The primary structure comprises 95 residues: Putative septation protein SpoVG (95 aa).

Belongs to the SpoVG family.

Its function is as follows. Could be involved in septation. In Clostridium acetobutylicum (strain ATCC 824 / DSM 792 / JCM 1419 / IAM 19013 / LMG 5710 / NBRC 13948 / NRRL B-527 / VKM B-1787 / 2291 / W), this protein is Putative septation protein SpoVG.